A 1634-amino-acid chain; its full sequence is Leucine-rich repeat-containing protein 37A3 (1634 aa).

The signal sequence occupies residues Met-1–Lys-35. The Extracellular segment spans residues Glu-36–Lys-1581. Disordered stretches follow at residues Pro-53–Glu-104, Ser-129–Pro-154, Thr-172–Ala-531, Pro-619–Glu-642, and Glu-758–Pro-777. An LRR 1 repeat occupies Leu-137–Leu-160. Composition is skewed to polar residues over residues Thr-172–Thr-189 and Glu-223–Ser-237. LRR repeat units follow at residues Leu-230–Glu-253 and Glu-267–Ala-290. Low complexity predominate over residues Leu-238–Leu-249. A glycan (N-linked (GlcNAc...) asparagine) is linked at Asn-296. Residues Thr-307–Pro-326 show a composition bias toward polar residues. Residues Ser-358–Glu-368 show a composition bias toward low complexity. A compositionally biased stretch (polar residues) spans Leu-433–Gly-446. The segment covering Ser-482–Pro-493 has biased composition (low complexity). Positions Thr-760–Glu-770 are enriched in polar residues. 6 LRR repeats span residues Asn-864–Ala-887, Tyr-888–Gly-911, Leu-912–Pro-935, Pro-937–Ala-959, Met-963–Leu-987, and Leu-1002–Cys-1027. Asn-1079 carries an N-linked (GlcNAc...) asparagine glycan. LRR repeat units lie at residues Leu-1124–Thr-1146 and Leu-1151–Lys-1176. Basic and acidic residues-rich tracts occupy residues Glu-1181–Gln-1191 and Ala-1201–Gln-1216. Disordered stretches follow at residues Glu-1181–Ala-1227 and Arg-1306–Lys-1329. Residues Phe-1359–Glu-1384 form an LRR 12 repeat. A helical membrane pass occupies residues Leu-1582 to Ile-1602. Over Glu-1603–Pro-1634 the chain is Cytoplasmic. Residues Asp-1614–Pro-1634 are disordered. Residues Ala-1624–Pro-1634 show a composition bias toward acidic residues.

It belongs to the LRRC37A family.

The protein localises to the membrane. This Homo sapiens (Human) protein is Leucine-rich repeat-containing protein 37A3 (LRRC37A3).